The primary structure comprises 422 residues: 2-(3-amino-3-carboxypropyl)histidine synthase subunit 1 (422 aa).

C128, C234, and C363 together coordinate [4Fe-4S] cluster.

Belongs to the DPH1/DPH2 family. DPH1 subfamily. In terms of assembly, component of the 2-(3-amino-3-carboxypropyl)histidine synthase complex composed of DPH1, DPH2, DPH3 and a NADH-dependent reductase, predominantly CBR1. It depends on [4Fe-4S] cluster as a cofactor.

It is found in the cytoplasm. The enzyme catalyses L-histidyl-[translation elongation factor 2] + S-adenosyl-L-methionine = 2-[(3S)-amino-3-carboxypropyl]-L-histidyl-[translation elongation factor 2] + S-methyl-5'-thioadenosine + H(+). Its pathway is protein modification; peptidyl-diphthamide biosynthesis. In terms of biological role, catalyzes the first step of diphthamide biosynthesis, a post-translational modification of histidine which occurs in elongation factor 2. DPH1 and DPH2 transfer a 3-amino-3-carboxypropyl (ACP) group from S-adenosyl-L-methionine (SAM) to a histidine residue, the reaction is assisted by a reduction system comprising DPH3 and a NADH-dependent reductase, predominantly CBR1. The sequence is that of 2-(3-amino-3-carboxypropyl)histidine synthase subunit 1 (DPH1) from Kluyveromyces lactis (strain ATCC 8585 / CBS 2359 / DSM 70799 / NBRC 1267 / NRRL Y-1140 / WM37) (Yeast).